Here is a 187-residue protein sequence, read N- to C-terminus: Shikimate kinase (187 aa).

Residue 18-23 (GCGKST) participates in ATP binding. Ser-22 lines the Mg(2+) pocket. The substrate site is built by Asp-40, Arg-64, and Gly-86. Residue Arg-128 coordinates ATP. Residue Arg-147 participates in substrate binding. Arg-164 contacts ATP.

The protein belongs to the shikimate kinase family. In terms of assembly, monomer. The cofactor is Mg(2+).

It localises to the cytoplasm. It catalyses the reaction shikimate + ATP = 3-phosphoshikimate + ADP + H(+). Its pathway is metabolic intermediate biosynthesis; chorismate biosynthesis; chorismate from D-erythrose 4-phosphate and phosphoenolpyruvate: step 5/7. Functionally, catalyzes the specific phosphorylation of the 3-hydroxyl group of shikimic acid using ATP as a cosubstrate. In Rhodopirellula baltica (strain DSM 10527 / NCIMB 13988 / SH1), this protein is Shikimate kinase.